The following is a 177-amino-acid chain: Ribonuclease H (177 aa).

One can recognise an RNase H type-1 domain in the interval 1 to 142; that stretch reads MSKQVEIFTD…ADELAREGMA (142 aa). Mg(2+) contacts are provided by Asp10, Glu48, Asp70, and Asp134. Residues 126 to 138 are compositionally biased toward basic and acidic residues; it reads GHTENERADELAR. Residues 126–177 are disordered; it reads GHTENERADELAREGMAPFKKGSFKPAASAPKPDAQLKQPVATKARRSTQSY.

The protein belongs to the RNase H family. Monomer. Mg(2+) serves as cofactor.

The protein localises to the cytoplasm. The enzyme catalyses Endonucleolytic cleavage to 5'-phosphomonoester.. In terms of biological role, endonuclease that specifically degrades the RNA of RNA-DNA hybrids. The polypeptide is Ribonuclease H (Mesorhizobium japonicum (strain LMG 29417 / CECT 9101 / MAFF 303099) (Mesorhizobium loti (strain MAFF 303099))).